We begin with the raw amino-acid sequence, 431 residues long: Protoheme IX farnesyltransferase, mitochondrial (431 aa).

A mitochondrion-targeting transit peptide spans 1–33 (MWRRSVVYRFSSRISVSSSLPNPRLIPWSRELC). 9 helical membrane passes run 109–129 (LVVA…AISF), 131–153 (GLCY…NQIF), 174–194 (ISVP…ACLL), 200–220 (MLAA…YTPL), 226–246 (INTW…WAAA), 255–275 (MILP…LAHL), 298–317 (IAAV…FIAY), 322–344 (TSSW…AFSF), and 356–376 (MFHA…LHRV).

The protein belongs to the ubiA prenyltransferase (TC 3.D.4.8) family.

The protein localises to the mitochondrion inner membrane. It catalyses the reaction heme b + (2E,6E)-farnesyl diphosphate + H2O = Fe(II)-heme o + diphosphate. Converts protoheme IX and farnesyl diphosphate to heme O. This chain is Protoheme IX farnesyltransferase, mitochondrial (COX10), found in Arabidopsis thaliana (Mouse-ear cress).